The primary structure comprises 833 residues: Ventricular zone-expressed PH domain-containing protein homolog 1 (833 aa).

Residues 201-319 (TELLALMSQL…TYLVSQLANM (119 aa)) form an interaction with TGFBR1 region. The tract at residues 458–505 (KGVGSDDGEDENRGDIPASISLSEIDPLGQGNDKLPFKTDTERSQLGE) is disordered. A compositionally biased stretch (basic and acidic residues) spans 492 to 502 (LPFKTDTERSQ). An interaction with TGFBR1 region spans residues 663–833 (ESTFPQQKDL…RESREVTTYL (171 aa)). The PH domain maps to 716 to 819 (QPLIEGKLKE…WLQCINVAVA (104 aa)).

It belongs to the MELT/VEPH family. As to quaternary structure, interacts with TGFBR1.

It is found in the cell membrane. Interacts with TGF-beta receptor type-1 (TGFBR1) and inhibits dissociation of activated SMAD2 from TGFBR1, impeding its nuclear accumulation and resulting in impaired TGF-beta signaling. May also affect FOXO, Hippo and Wnt signaling. The protein is Ventricular zone-expressed PH domain-containing protein homolog 1 (VEPH1) of Homo sapiens (Human).